The chain runs to 234 residues: LRP chaperone MESD (234 aa).

The N-terminal stretch at 1 to 33 (MAASRWARKAVVLLCASDLLLLLLLLPPPGSCA) is a signal peptide. The tract at residues 1 to 164 (MAASRWARKA…DRAIFMLRDG (164 aa)) is chaperone domain. Disordered stretches follow at residues 31–95 (SCAA…DFSK) and 187–234 (GQVY…REDL). Basic and acidic residues predominate over residues 54–70 (DIRDYNDADMARLLEQW). Acidic residues predominate over residues 71-80 (EKDDDIEEGD). The segment at 165–204 (SYAWEIKDFLVGQDRCADVTLEGQVYPGKGGGSKEKNKTK) is escort domain. Positions 196 to 234 (GSKEKNKTKQDKGKKKKEGDLKSRSSKEENRAGNKREDL) are enriched in basic and acidic residues. A glycan (N-linked (GlcNAc...) asparagine) is linked at N201. A Prevents secretion from ER motif is present at residues 231-234 (REDL).

The protein belongs to the MESD family. Monomer. Interacts with LRP5; the interaction prevents LRP5 from forming aggregates and chaperones LRP6 to the plasma membrane. Interacts with LRP6; the interaction prevents LRP6 from forming aggregates and chaperones LRP6 to the plasma membrane. Interacts with LRP4; the interaction promotes glycosylation of LRP4 and its cell-surface expression.

It is found in the endoplasmic reticulum. Its function is as follows. Chaperone specifically assisting the folding of beta-propeller/EGF modules within the family of low-density lipoprotein receptors (LDLRs). Acts as a modulator of the Wnt pathway through chaperoning the coreceptors of the canonical Wnt pathway, LRP5 and LRP6, to the plasma membrane. Essential for specification of embryonic polarity and mesoderm induction. Plays an essential role in neuromuscular junction (NMJ) formation by promoting cell-surface expression of LRP4. May regulate phagocytosis of apoptotic retinal pigment epithelium (RPE) cells. The protein is LRP chaperone MESD of Homo sapiens (Human).